The primary structure comprises 314 residues: MIEIEKPKIETVEISDDAKYGKFVVEPLERGYGTTLGNSLRRILLSSLPGAAVTSIQIDGVLHEFSTIEGVVEDVTTIILNIKKLALKIYSEEEKTLEIDVQGEGVVTAADITHDSDVEILNPDLHIATLGQNASFRVRLTAQRGRGYTPADANKRDDQPIGVIPIDSIFTPVSRVSYQVENTRVGQITNYDKLTLDVWTDGSTGPKEAIALGSKILTEHLNIFVGLTDEAQHAEIMVEKEEDQKEKVLEMTIEELDLSVRSYNCLKRAGINTVQELANKTEEDMMKVRNLGRKSLEEVKAKLEELGLGLRKDD.

The segment at 1–228 (MIEIEKPKIE…EHLNIFVGLT (228 aa)) is alpha N-terminal domain (alpha-NTD). The tract at residues 245–314 (KEKVLEMTIE…ELGLGLRKDD (70 aa)) is alpha C-terminal domain (alpha-CTD).

It belongs to the RNA polymerase alpha chain family. Homodimer. The RNAP catalytic core consists of 2 alpha, 1 beta, 1 beta' and 1 omega subunit. When a sigma factor is associated with the core the holoenzyme is formed, which can initiate transcription.

The catalysed reaction is RNA(n) + a ribonucleoside 5'-triphosphate = RNA(n+1) + diphosphate. DNA-dependent RNA polymerase catalyzes the transcription of DNA into RNA using the four ribonucleoside triphosphates as substrates. This chain is DNA-directed RNA polymerase subunit alpha, found in Bacillus licheniformis (strain ATCC 14580 / DSM 13 / JCM 2505 / CCUG 7422 / NBRC 12200 / NCIMB 9375 / NCTC 10341 / NRRL NRS-1264 / Gibson 46).